The chain runs to 207 residues: Guanylate kinase (207 aa).

In terms of domain architecture, Guanylate kinase-like spans 4–184; that stretch reads GTLYIVSAPS…ALSDLKTIIR (181 aa). Residue 11-18 participates in ATP binding; sequence APSGAGKS.

It belongs to the guanylate kinase family.

The protein resides in the cytoplasm. It carries out the reaction GMP + ATP = GDP + ADP. Essential for recycling GMP and indirectly, cGMP. This Salmonella paratyphi A (strain ATCC 9150 / SARB42) protein is Guanylate kinase.